A 264-amino-acid chain; its full sequence is Thiazole synthase (264 aa).

Residue Lys98 is the Schiff-base intermediate with DXP of the active site. Residues Gly159, 185-186, and 207-208 each bind 1-deoxy-D-xylulose 5-phosphate; these read AG and AT.

This sequence belongs to the ThiG family. Homotetramer. Forms heterodimers with either ThiH or ThiS.

It localises to the cytoplasm. It catalyses the reaction [ThiS sulfur-carrier protein]-C-terminal-Gly-aminoethanethioate + 2-iminoacetate + 1-deoxy-D-xylulose 5-phosphate = [ThiS sulfur-carrier protein]-C-terminal Gly-Gly + 2-[(2R,5Z)-2-carboxy-4-methylthiazol-5(2H)-ylidene]ethyl phosphate + 2 H2O + H(+). It functions in the pathway cofactor biosynthesis; thiamine diphosphate biosynthesis. Its function is as follows. Catalyzes the rearrangement of 1-deoxy-D-xylulose 5-phosphate (DXP) to produce the thiazole phosphate moiety of thiamine. Sulfur is provided by the thiocarboxylate moiety of the carrier protein ThiS. In vitro, sulfur can be provided by H(2)S. The chain is Thiazole synthase from Mycobacterium marinum (strain ATCC BAA-535 / M).